The primary structure comprises 522 residues: Glutamate--cysteine ligase, chloroplastic (522 aa).

Intrachain disulfides connect Cys186–Cys406 and Cys349–Cys364.

This sequence belongs to the carboxylate-amine ligase family. Glutamate--cysteine ligase type 2 subfamily. As to quaternary structure, homodimer or monomer when oxidized or reduced, respectively. Post-translationally, the Cys-186-Cys-406 disulfide bridge is known to modulate the enzyme activity according to the redox status. The oxidized form constitutes the active enzyme. As to expression, abundant in leaves and roots. Expressed to a high level in leaf trichomes of mature plant.

It is found in the plastid. It localises to the chloroplast. It carries out the reaction L-cysteine + L-glutamate + ATP = gamma-L-glutamyl-L-cysteine + ADP + phosphate + H(+). It functions in the pathway sulfur metabolism; glutathione biosynthesis; glutathione from L-cysteine and L-glutamate: step 1/2. Its activity is regulated as follows. Feedback inhibition by glutathione. Inhibited by buthionine sulfoximine and cystamine. In terms of biological role, seems to play an important role in controlling the expression of resistance responses like the regulation of salicylic acid (SA) and phytoalexin (camalexin) production. Involved in resistance to fungal and bacterial pathogens. Required for the regulation of cell proliferation in root apical meristems through the GSH-dependent developmental pathway. Also participates in the detoxification process, the antioxidant response and is essential for embryo development and proper seed maturation. The polypeptide is Glutamate--cysteine ligase, chloroplastic (GSH1) (Arabidopsis thaliana (Mouse-ear cress)).